The chain runs to 510 residues: Hyaluronidase PH-20 (510 aa).

Residues 1-35 (MGVLKFKHIFFRSFVKSSGVSQIVFTFLLIPCCLT) form the signal peptide. 2 disulfides stabilise this stretch: Cys60–Cys351 and Cys224–Cys238. An N-linked (GlcNAc...) asparagine glycan is attached at Asn82. Glu148 acts as the Proton donor in catalysis. Residues Asn166, Asn235, Asn254, and Asn368 are each glycosylated (N-linked (GlcNAc...) asparagine). Disulfide bonds link Cys376–Cys387, Cys381–Cys435, and Cys437–Cys464. Residues Asn393, Asn440, and Asn484 are each glycosylated (N-linked (GlcNAc...) asparagine). Ser491 carries the GPI-anchor amidated serine lipid modification. Positions 492–510 (TTMFIVNILFLIISSVASL) are cleaved as a propeptide — removed in mature form.

The protein belongs to the glycosyl hydrolase 56 family. In terms of tissue distribution, testis.

The protein resides in the cell membrane. The catalysed reaction is Random hydrolysis of (1-&gt;4)-linkages between N-acetyl-beta-D-glucosamine and D-glucuronate residues in hyaluronate.. Involved in sperm-egg adhesion. Upon fertilization sperm must first penetrate a layer of cumulus cells that surrounds the egg before reaching the zona pellucida. The cumulus cells are embedded in a matrix containing hyaluronic acid which is formed prior to ovulation. This protein aids in penetrating the layer of cumulus cells by digesting hyaluronic acid. The chain is Hyaluronidase PH-20 (SPAM1) from Macaca fascicularis (Crab-eating macaque).